Reading from the N-terminus, the 280-residue chain is 2-dehydro-3-deoxyphosphooctonate aldolase (280 aa).

This sequence belongs to the KdsA family.

It is found in the cytoplasm. It catalyses the reaction D-arabinose 5-phosphate + phosphoenolpyruvate + H2O = 3-deoxy-alpha-D-manno-2-octulosonate-8-phosphate + phosphate. It functions in the pathway carbohydrate biosynthesis; 3-deoxy-D-manno-octulosonate biosynthesis; 3-deoxy-D-manno-octulosonate from D-ribulose 5-phosphate: step 2/3. The protein operates within bacterial outer membrane biogenesis; lipopolysaccharide biosynthesis. The protein is 2-dehydro-3-deoxyphosphooctonate aldolase of Neisseria meningitidis serogroup C / serotype 2a (strain ATCC 700532 / DSM 15464 / FAM18).